A 119-amino-acid chain; its full sequence is MNAVLSVQGASAPVKKKSFFSKFTRLNMLRLARAVIPAAVLMMFFPQLAMAAQGQDLMASGNTTVKATFGKDSSVVKWVVLAEVLVGAVMYMMTKNVKFLAGFAIISVFIAVGMAVVGL.

The propeptide occupies 1 to 51 (MNAVLSVQGASAPVKKKSFFSKFTRLNMLRLARAVIPAAVLMMFFPQLAMA). The Periplasmic portion of the chain corresponds to 1–73 (MNAVLSVQGA…TVKATFGKDS (73 aa)). An N-acetylalanine modification is found at Ala52. The chain crosses the membrane as a helical span at residues 74–94 (SVVKWVVLAEVLVGAVMYMMT). The Cytoplasmic portion of the chain corresponds to 95–98 (KNVK). A helical transmembrane segment spans residues 99–119 (FLAGFAIISVFIAVGMAVVGL).

Belongs to the TraA family. Monomer. Interacts with itself to form filaments; also interacts with TraQ.

The protein localises to the cell inner membrane. Its subcellular location is the secreted. Propilin is the precursor of the pilus subunit, pilin, that forms conjugative pili, the filamentous surface appendages required for cell-to-cell contact during the earlier stages of bacterial conjugation, and that retract after contact is established. Mature pilin is assembled with the help of TraQ and TraX. This Escherichia coli protein is Pilin (traA).